A 118-amino-acid chain; its full sequence is Large ribosomal subunit protein eL18 (118 aa).

This sequence belongs to the eukaryotic ribosomal protein eL18 family.

The polypeptide is Large ribosomal subunit protein eL18 (rpl18e) (Sulfolobus acidocaldarius (strain ATCC 33909 / DSM 639 / JCM 8929 / NBRC 15157 / NCIMB 11770)).